The chain runs to 255 residues: Geranylgeranylglyceryl phosphate synthase (255 aa).

Residues D25 and S54 each contribute to the Mg(2+) site. Residues 173–179, 203–204, and 225–226 contribute to the sn-glycerol 1-phosphate site; these read YLEGGSG, GG, and GT.

This sequence belongs to the GGGP/HepGP synthase family. Group II subfamily. Mg(2+) is required as a cofactor.

It localises to the cytoplasm. It carries out the reaction sn-glycerol 1-phosphate + (2E,6E,10E)-geranylgeranyl diphosphate = sn-3-O-(geranylgeranyl)glycerol 1-phosphate + diphosphate. It participates in membrane lipid metabolism; glycerophospholipid metabolism. In terms of biological role, prenyltransferase that catalyzes the transfer of the geranylgeranyl moiety of geranylgeranyl diphosphate (GGPP) to the C3 hydroxyl of sn-glycerol-1-phosphate (G1P). This reaction is the first ether-bond-formation step in the biosynthesis of archaeal membrane lipids. This chain is Geranylgeranylglyceryl phosphate synthase, found in Thermofilum pendens (strain DSM 2475 / Hrk 5).